The chain runs to 342 residues: MSAPDGPLARLEARLTREWQRRGALAWALTPFACVFGLCAALRRTAYAQGWKKPVDVGVPVVVVGNVTVGGTGKTPTVIALVDALRAAGFTPGIVSRGYGANVKAPTAVTTASRASAGGDEPLLIARRTGAPVWVCPDRVAAAQALRAAHPDVDVIVSDDGLQHYRLARTVELVVFDHRLGGNGFLLPAGPLREPLSRHRDATLVNDPYSGALPPWPDTYSLALTPGAAWHLDQPALRRPLSQFANERVLAAAGIGAPERFFATLRSAGLAPATRALPDHYAFADNPFVDDAVDAILITEKDAVKLGASWRDARLWVVPVEAALDPRLIALVVEKLRGRSPA.

Residue 68–75 (TVGGTGKT) participates in ATP binding.

It belongs to the LpxK family.

The catalysed reaction is a lipid A disaccharide + ATP = a lipid IVA + ADP + H(+). Its pathway is glycolipid biosynthesis; lipid IV(A) biosynthesis; lipid IV(A) from (3R)-3-hydroxytetradecanoyl-[acyl-carrier-protein] and UDP-N-acetyl-alpha-D-glucosamine: step 6/6. Transfers the gamma-phosphate of ATP to the 4'-position of a tetraacyldisaccharide 1-phosphate intermediate (termed DS-1-P) to form tetraacyldisaccharide 1,4'-bis-phosphate (lipid IVA). The chain is Tetraacyldisaccharide 4'-kinase from Burkholderia lata (strain ATCC 17760 / DSM 23089 / LMG 22485 / NCIMB 9086 / R18194 / 383).